We begin with the raw amino-acid sequence, 108 residues long: Large ribosomal subunit protein P2A (108 aa).

Residues 62-108 (LSSVPSGAPAAAAGGASAAAGGEATEEAAEEEAAEESDDDMSFGLFD) form a disordered region. Over residues 68 to 84 (GAPAAAAGGASAAAGGE) the composition is skewed to low complexity. Positions 85 to 102 (ATEEAAEEEAAEESDDDM) are enriched in acidic residues. S98 carries the phosphoserine modification.

This sequence belongs to the eukaryotic ribosomal protein P1/P2 family.

Functionally, plays an important role in the elongation step of protein synthesis. This is Large ribosomal subunit protein P2A (RPP2A) from Candida albicans (Yeast).